Here is a 290-residue protein sequence, read N- to C-terminus: 4-hydroxy-tetrahydrodipicolinate synthase (290 aa).

Pyruvate is bound at residue T44. Y132 (proton donor/acceptor) is an active-site residue. K160 serves as the catalytic Schiff-base intermediate with substrate. Residue I202 participates in pyruvate binding.

The protein belongs to the DapA family. In terms of assembly, homotetramer; dimer of dimers.

Its subcellular location is the cytoplasm. It carries out the reaction L-aspartate 4-semialdehyde + pyruvate = (2S,4S)-4-hydroxy-2,3,4,5-tetrahydrodipicolinate + H2O + H(+). It functions in the pathway amino-acid biosynthesis; L-lysine biosynthesis via DAP pathway; (S)-tetrahydrodipicolinate from L-aspartate: step 3/4. Functionally, catalyzes the condensation of (S)-aspartate-beta-semialdehyde [(S)-ASA] and pyruvate to 4-hydroxy-tetrahydrodipicolinate (HTPA). The sequence is that of 4-hydroxy-tetrahydrodipicolinate synthase from Pelobacter propionicus (strain DSM 2379 / NBRC 103807 / OttBd1).